The primary structure comprises 525 residues: GMP synthase [glutamine-hydrolyzing] (525 aa).

The region spanning 9-207 (RILILDFGSQ…VRDICQCEAL (199 aa)) is the Glutamine amidotransferase type-1 domain. The Nucleophile role is filled by cysteine 86. Catalysis depends on residues histidine 181 and glutamate 183. The GMPS ATP-PPase domain occupies 208–400 (WTPAKIIDDA…LGLPYDMLYR (193 aa)). 235–241 (SGGVDSS) is a binding site for ATP.

In terms of assembly, homodimer.

The catalysed reaction is XMP + L-glutamine + ATP + H2O = GMP + L-glutamate + AMP + diphosphate + 2 H(+). It functions in the pathway purine metabolism; GMP biosynthesis; GMP from XMP (L-Gln route): step 1/1. Functionally, catalyzes the synthesis of GMP from XMP. The polypeptide is GMP synthase [glutamine-hydrolyzing] (Escherichia coli O17:K52:H18 (strain UMN026 / ExPEC)).